The primary structure comprises 357 residues: UDP-N-acetylglucosamine--N-acetylmuramyl-(pentapeptide) pyrophosphoryl-undecaprenol N-acetylglucosamine transferase (357 aa).

Residues 10–12 (TGG), Asn124, Ser189, Ile244, and Gln289 contribute to the UDP-N-acetyl-alpha-D-glucosamine site.

Belongs to the glycosyltransferase 28 family. MurG subfamily.

It localises to the cell membrane. It carries out the reaction Mur2Ac(oyl-L-Ala-gamma-D-Glu-L-Lys-D-Ala-D-Ala)-di-trans,octa-cis-undecaprenyl diphosphate + UDP-N-acetyl-alpha-D-glucosamine = beta-D-GlcNAc-(1-&gt;4)-Mur2Ac(oyl-L-Ala-gamma-D-Glu-L-Lys-D-Ala-D-Ala)-di-trans,octa-cis-undecaprenyl diphosphate + UDP + H(+). It functions in the pathway cell wall biogenesis; peptidoglycan biosynthesis. Functionally, cell wall formation. Catalyzes the transfer of a GlcNAc subunit on undecaprenyl-pyrophosphoryl-MurNAc-pentapeptide (lipid intermediate I) to form undecaprenyl-pyrophosphoryl-MurNAc-(pentapeptide)GlcNAc (lipid intermediate II). The sequence is that of UDP-N-acetylglucosamine--N-acetylmuramyl-(pentapeptide) pyrophosphoryl-undecaprenol N-acetylglucosamine transferase from Lactococcus lactis subsp. cremoris (strain MG1363).